Here is a 326-residue protein sequence, read N- to C-terminus: Acetyl-coenzyme A carboxylase carboxyl transferase subunit alpha (326 aa).

One can recognise a CoA carboxyltransferase C-terminal domain in the interval 44-298 (KLETRAMQLR…KQALLDNLDE (255 aa)).

Belongs to the AccA family. Acetyl-CoA carboxylase is a heterohexamer composed of biotin carboxyl carrier protein (AccB), biotin carboxylase (AccC) and two subunits each of ACCase subunit alpha (AccA) and ACCase subunit beta (AccD).

Its subcellular location is the cytoplasm. It carries out the reaction N(6)-carboxybiotinyl-L-lysyl-[protein] + acetyl-CoA = N(6)-biotinyl-L-lysyl-[protein] + malonyl-CoA. The protein operates within lipid metabolism; malonyl-CoA biosynthesis; malonyl-CoA from acetyl-CoA: step 1/1. In terms of biological role, component of the acetyl coenzyme A carboxylase (ACC) complex. First, biotin carboxylase catalyzes the carboxylation of biotin on its carrier protein (BCCP) and then the CO(2) group is transferred by the carboxyltransferase to acetyl-CoA to form malonyl-CoA. This is Acetyl-coenzyme A carboxylase carboxyl transferase subunit alpha from Nostoc sp. (strain PCC 7120 / SAG 25.82 / UTEX 2576).